The chain runs to 257 residues: Glutamate racemase (257 aa).

Substrate contacts are provided by residues 12-13 and 44-45; these read DS and YG. C75 serves as the catalytic Proton donor/acceptor. A substrate-binding site is contributed by 76-77; it reads NT. C176 functions as the Proton donor/acceptor in the catalytic mechanism. 177-178 contacts substrate; the sequence is TH.

The protein belongs to the aspartate/glutamate racemases family.

The enzyme catalyses L-glutamate = D-glutamate. The protein operates within cell wall biogenesis; peptidoglycan biosynthesis. Provides the (R)-glutamate required for cell wall biosynthesis. The sequence is that of Glutamate racemase from Thermus thermophilus (strain ATCC 27634 / DSM 579 / HB8).